Reading from the N-terminus, the 547-residue chain is DNA polymerase kappa (547 aa).

Residues 18-39 (LTIEDDGSSSSDEEATLKRRLA) are disordered. Over residues 20–31 (IEDDGSSSSDEE) the composition is skewed to acidic residues. A UmuC domain is found at 132–316 (IVHVDCDAFY…LPVREVSGIG (185 aa)). The Mg(2+) site is built by Asp-136 and Asp-226. The segment at 489–518 (TVPCPVCQKNIENELGILNQHVDLCLNVET) adopts a UBZ4-type zinc-finger fold. The Zn(2+) site is built by Cys-492, Cys-495, His-509, and Cys-513.

In terms of assembly, interacts with hus1 and rad17.

The protein resides in the cytoplasm. The protein localises to the nucleus. It carries out the reaction DNA(n) + a 2'-deoxyribonucleoside 5'-triphosphate = DNA(n+1) + diphosphate. Functionally, DNA polymerase specifically involved in DNA repair. Plays an important role in translesion synthesis, where the normal high-fidelity DNA polymerases cannot proceed and DNA synthesis stalls. Has a role in meiosis. In Schizosaccharomyces pombe (strain 972 / ATCC 24843) (Fission yeast), this protein is DNA polymerase kappa (mug40).